The chain runs to 358 residues: Putative pyruvyl transferase EpsI (358 aa).

The protein belongs to the polysaccharide pyruvyl transferase family.

May be involved in the production of the exopolysaccharide (EPS) component of the extracellular matrix during biofilm formation. EPS is responsible for the adhesion of chains of cells into bundles. This Bacillus subtilis (strain 168) protein is Putative pyruvyl transferase EpsI (epsI).